The following is a 491-amino-acid chain: Protein DETOXIFICATION 56 (491 aa).

12 helical membrane-spanning segments follow: residues 39-59 (LPLV…SVFL), 72-92 (LGFS…SAAM), 111-131 (TLFM…FLWL), 154-174 (LLYL…KAYL), 181-201 (LPIM…NIVL), 212-232 (MAVW…VIVV), 261-281 (GPCC…VLLT), 291-311 (VSIL…MLSL), 336-356 (YTTL…MIAF), 379-399 (MLIM…GEIV), 409-429 (MYAN…TLAF), and 438-458 (FLIG…IFIA).

The protein belongs to the multi antimicrobial extrusion (MATE) (TC 2.A.66.1) family. Interacts with BCA4 and HT1. Preferentially expressed in guard cells.

Its subcellular location is the cell membrane. In terms of biological role, could function as a HCO(3)(-) -sensing component in the CO(2) signaling pathway in guard cells. Acts as an upstream repressor of HT1. Plays a role in stomatal response to CO(2). This chain is Protein DETOXIFICATION 56, found in Arabidopsis thaliana (Mouse-ear cress).